The chain runs to 273 residues: 6-carboxyhexanoate--CoA ligase (273 aa).

Belongs to the BioW family. As to quaternary structure, homodimer. It depends on Mg(2+) as a cofactor.

It carries out the reaction heptanedioate + ATP + CoA = 6-carboxyhexanoyl-CoA + AMP + diphosphate. The protein operates within metabolic intermediate metabolism; pimeloyl-CoA biosynthesis; pimeloyl-CoA from pimelate: step 1/1. Its function is as follows. Catalyzes the transformation of pimelate into pimeloyl-CoA with concomitant hydrolysis of ATP to AMP. The sequence is that of 6-carboxyhexanoate--CoA ligase from Alkalihalophilus pseudofirmus (strain ATCC BAA-2126 / JCM 17055 / OF4) (Bacillus pseudofirmus).